Reading from the N-terminus, the 126-residue chain is Major sperm protein 1 (126 aa).

An N-acetylalanine modification is found at alanine 2. Residues 8 to 125 enclose the MSP domain; that stretch reads DIATMPAQKV…RRKNLPIEYN (118 aa).

In terms of tissue distribution, sperm.

It is found in the cell projection. Its subcellular location is the pseudopodium. The protein localises to the cytoplasm. The protein resides in the cytoskeleton. In terms of biological role, central component in molecular interactions underlying sperm crawling. Forms an extensive filament system that extends from sperm villipoda, along the leading edge of the pseudopod. The chain is Major sperm protein 1 (MSP-1) from Globodera rostochiensis (Golden nematode worm).